A 293-amino-acid chain; its full sequence is Ethanolamine ammonia-lyase small subunit (293 aa).

2 residues coordinate adenosylcob(III)alamin: V207 and E228.

It belongs to the EutC family. In terms of assembly, the basic unit is a heterodimer which dimerizes to form tetramers. The heterotetramers trimerize; 6 large subunits form a core ring with 6 small subunits projecting outwards. Adenosylcob(III)alamin serves as cofactor.

It localises to the bacterial microcompartment. The enzyme catalyses ethanolamine = acetaldehyde + NH4(+). The protein operates within amine and polyamine degradation; ethanolamine degradation. Catalyzes the deamination of various vicinal amino-alcohols to oxo compounds. Allows this organism to utilize ethanolamine as the sole source of nitrogen and carbon in the presence of external vitamin B12. The sequence is that of Ethanolamine ammonia-lyase small subunit from Listeria monocytogenes serovar 1/2a (strain ATCC BAA-679 / EGD-e).